Consider the following 127-residue polypeptide: Major sperm protein isoform beta (127 aa).

Ala-2 is subject to N-acetylalanine. Residues 9–126 form the MSP domain; that stretch reads DINTQPGSKI…RRKNLPIEYN (118 aa).

In terms of assembly, forms filaments 10 nm wide, with a characteristic substructure repeating axially at 9 nm. Sperm.

The protein localises to the cell projection. It is found in the pseudopodium. It localises to the cytoplasm. Its subcellular location is the cytoskeleton. Central component in molecular interactions underlying sperm crawling. Forms an extensive filament system that extends from sperm villipoda, along the leading edge of the pseudopod. This chain is Major sperm protein isoform beta, found in Ascaris suum (Pig roundworm).